A 207-amino-acid polypeptide reads, in one-letter code: Glutathione S-transferase 3 (207 aa).

The region spanning 2 to 79 (VHYKLTYFNA…YLARKFGFVG (78 aa)) is the GST N-terminal domain. Glutathione is bound by residues Y8, K43, 49 to 51 (GQV), and 63 to 64 (QS). The 127-residue stretch at 81 to 207 (TAEEELQADE…WLAKRPETRF (127 aa)) folds into the GST C-terminal domain.

The protein belongs to the GST superfamily. Sigma family.

It carries out the reaction RX + glutathione = an S-substituted glutathione + a halide anion + H(+). Conjugation of reduced glutathione to a wide number of exogenous and endogenous hydrophobic electrophiles. This is Glutathione S-transferase 3 (gst-3) from Caenorhabditis elegans.